The sequence spans 429 residues: Adenylosuccinate synthetase (429 aa).

Residues 12-18 and 40-42 each bind GTP; these read GDEGKGK and GHT. Aspartate 13 (proton acceptor) is an active-site residue. Mg(2+)-binding residues include aspartate 13 and glycine 40. Residues 13-16, 38-41, threonine 128, arginine 142, glutamine 223, threonine 238, and arginine 302 contribute to the IMP site; these read DEGK and NAGH. Histidine 41 acts as the Proton donor in catalysis. 298 to 304 is a binding site for substrate; that stretch reads VNTGRKR. Residues arginine 304, 330 to 332, and 412 to 414 contribute to the GTP site; these read KLD and GVG.

The protein belongs to the adenylosuccinate synthetase family. In terms of assembly, homodimer. The cofactor is Mg(2+).

The protein localises to the cytoplasm. It catalyses the reaction IMP + L-aspartate + GTP = N(6)-(1,2-dicarboxyethyl)-AMP + GDP + phosphate + 2 H(+). It functions in the pathway purine metabolism; AMP biosynthesis via de novo pathway; AMP from IMP: step 1/2. Functionally, plays an important role in the de novo pathway of purine nucleotide biosynthesis. Catalyzes the first committed step in the biosynthesis of AMP from IMP. This Corynebacterium jeikeium (strain K411) protein is Adenylosuccinate synthetase.